Consider the following 293-residue polypeptide: Acetylglutamate kinase (293 aa).

Residues 66–67 (GG), Arg88, and Asn190 each bind substrate.

This sequence belongs to the acetylglutamate kinase family. ArgB subfamily.

It is found in the cytoplasm. The catalysed reaction is N-acetyl-L-glutamate + ATP = N-acetyl-L-glutamyl 5-phosphate + ADP. The protein operates within amino-acid biosynthesis; L-arginine biosynthesis; N(2)-acetyl-L-ornithine from L-glutamate: step 2/4. Its function is as follows. Catalyzes the ATP-dependent phosphorylation of N-acetyl-L-glutamate. The protein is Acetylglutamate kinase of Thiobacillus denitrificans (strain ATCC 25259 / T1).